A 160-amino-acid chain; its full sequence is Lipoprotein signal peptidase (160 aa).

A run of 2 helical transmembrane segments spans residues Ile-60–Ile-80 and Leu-84–Val-104. Residues Asp-118 and Asp-132 contribute to the active site. A helical membrane pass occupies residues Phe-128 to Val-148.

Belongs to the peptidase A8 family.

It is found in the cell membrane. It carries out the reaction Release of signal peptides from bacterial membrane prolipoproteins. Hydrolyzes -Xaa-Yaa-Zaa-|-(S,diacylglyceryl)Cys-, in which Xaa is hydrophobic (preferably Leu), and Yaa (Ala or Ser) and Zaa (Gly or Ala) have small, neutral side chains.. The protein operates within protein modification; lipoprotein biosynthesis (signal peptide cleavage). This protein specifically catalyzes the removal of signal peptides from prolipoproteins. The protein is Lipoprotein signal peptidase of Dehalococcoides mccartyi (strain CBDB1).